The primary structure comprises 959 residues: General transcription factor II-I repeat domain-containing protein 1 (959 aa).

Glycyl lysine isopeptide (Lys-Gly) (interchain with G-Cter in SUMO2) cross-links involve residues lysine 27 and lysine 94. The segment covering 96-106 has biased composition (basic and acidic residues); the sequence is PEAEHPKKVQR. Residues 96–117 form a disordered region; the sequence is PEAEHPKKVQRGEGGGRSLPRS. The stretch at 119-213 is one GTF2I-like 1 repeat; that stretch reads LEHGSDVYLL…LEDGGRDSKA (95 aa). Glycyl lysine isopeptide (Lys-Gly) (interchain with G-Cter in SUMO2) cross-links involve residues lysine 184, lysine 212, lysine 225, lysine 238, lysine 271, lysine 294, lysine 308, lysine 337, lysine 436, lysine 439, and lysine 443. The disordered stretch occupies residues 230-250; it reads CGLHGQAPKVPPQDLPPTATS. The stretch at 342 to 436 is one GTF2I-like 2 repeat; it reads IKETEDINTL…FDERIFTGNK (95 aa). Position 448 is a phosphoserine (serine 448). Residues 468-492 form a disordered region; it reads NARSDKGSMSEDCGPGTSGELGGLR. The stretch at 556-650 is one GTF2I-like 3 repeat; sequence DSHGDVIRPL…ELLTEGVKEP (95 aa). Glycyl lysine isopeptide (Lys-Gly) (interchain with G-Cter in SUMO2) cross-links involve residues lysine 567, lysine 579, lysine 588, lysine 622, lysine 638, and lysine 648. Serine 654 is subject to Phosphoserine. The tract at residues 654–679 is disordered; it reads SQGTASSLGFSPPALPPERDSGDPLV. Glycyl lysine isopeptide (Lys-Gly) (interchain with G-Cter in SUMO2) cross-links involve residues proline 669, proline 670, aspartate 680, and lysine 684. Glutamine 686 is subject to Phosphoserine. GTF2I-like repeat units follow at residues 696–790 and 793–887; these read LSRI…KPDE and ANRL…ICND. Glycyl lysine isopeptide (Lys-Gly) (interchain with G-Cter in SUMO2) cross-links involve residues isoleucine 701, lysine 724, lysine 732, lysine 772, lysine 774, lysine 787, lysine 829, lysine 889, and lysine 893. Residues 892–927 are disordered; it reads AKDSSIPKRKRKRVSEGNSVSSSSSSSSSSSSNPDS. The Nuclear localization signal motif lies at 898–905; sequence PKRKRKRV. A compositionally biased stretch (low complexity) spans 910–923; sequence SVSSSSSSSSSSSS.

Belongs to the TFII-I family. As to quaternary structure, interacts with the retinoblastoma protein (RB1) via its C-terminus. Highly expressed in adult skeletal muscle, heart, fibroblast, bone and fetal tissues. Expressed at lower levels in all other tissues tested.

It localises to the nucleus. In terms of biological role, may be a transcription regulator involved in cell-cycle progression and skeletal muscle differentiation. May repress GTF2I transcriptional functions, by preventing its nuclear residency, or by inhibiting its transcriptional activation. May contribute to slow-twitch fiber type specificity during myogenesis and in regenerating muscles. Binds troponin I slow-muscle fiber enhancer (USE B1). Binds specifically and with high affinity to the EFG sequences derived from the early enhancer of HOXC8. In Homo sapiens (Human), this protein is General transcription factor II-I repeat domain-containing protein 1 (GTF2IRD1).